A 153-amino-acid chain; its full sequence is Endoribonuclease YbeY (153 aa).

Residues H118, H122, and H128 each contribute to the Zn(2+) site.

The protein belongs to the endoribonuclease YbeY family. Zn(2+) is required as a cofactor.

The protein localises to the cytoplasm. Functionally, single strand-specific metallo-endoribonuclease involved in late-stage 70S ribosome quality control and in maturation of the 3' terminus of the 16S rRNA. This chain is Endoribonuclease YbeY, found in Oenococcus oeni (strain ATCC BAA-331 / PSU-1).